A 342-amino-acid polypeptide reads, in one-letter code: N-acetyl-gamma-glutamyl-phosphate reductase (342 aa).

Cys147 is a catalytic residue.

The protein belongs to the NAGSA dehydrogenase family. Type 1 subfamily.

Its subcellular location is the cytoplasm. It catalyses the reaction N-acetyl-L-glutamate 5-semialdehyde + phosphate + NADP(+) = N-acetyl-L-glutamyl 5-phosphate + NADPH + H(+). It functions in the pathway amino-acid biosynthesis; L-arginine biosynthesis; N(2)-acetyl-L-ornithine from L-glutamate: step 3/4. Catalyzes the NADPH-dependent reduction of N-acetyl-5-glutamyl phosphate to yield N-acetyl-L-glutamate 5-semialdehyde. The polypeptide is N-acetyl-gamma-glutamyl-phosphate reductase (Campylobacter jejuni subsp. jejuni serotype O:2 (strain ATCC 700819 / NCTC 11168)).